Here is a 1223-residue protein sequence, read N- to C-terminus: Rho family-interacting cell polarization regulator 1 (1223 aa).

Ser22 carries the post-translational modification Phosphoserine. The stretch at 89–114 (LTAYLEVHQQEQEKLQGQIRESKRNS) forms a coiled coil. Phosphoserine is present on residues Ser349 and Ser351. Position 355 is a phosphothreonine (Thr355). The disordered stretch occupies residues 375–411 (NGTAWSLSSESSDDSSSPQLSGTARHSPAPRPLVQQP). The span at 380–395 (SLSSESSDDSSSPQLS) shows a compositional bias: low complexity. Ser456 and Ser459 each carry phosphoserine. 2 disordered regions span residues 475-769 (ESLA…APQH) and 856-889 (FLNE…SPSA). Low complexity-rich tracts occupy residues 505–523 (GHSA…PTST) and 546–564 (PGPT…TTTH). Polar residues predominate over residues 565-592 (SAPSPLTHTTTGSTHKPIISTLTTTGPT). Composition is skewed to low complexity over residues 601–650 (TTTS…PTPS) and 659–675 (TSPT…TTSP). The segment covering 680-695 (VSPSTSLELATLSSPS) has biased composition (polar residues). Over residues 858-867 (NEDEDEDNDV) the composition is skewed to acidic residues. Ser874 and Ser875 each carry phosphoserine.

It belongs to the RIPOR family. In terms of assembly, interacts (via N-terminus) with RHOA (GTP-bound form); this interaction links active RHOA to STK24 and STK26 kinases. Interacts with RHOB. Interacts with RHOC. Interacts (via C-terminus) with PDCD10; this interaction occurs in a Rho-independent manner. Interacts (via C-terminus) with STK24; this interaction occurs in a PDCD10-dependent and Rho-independent manner. Interacts (via C-terminus) with STK26; this interaction occurs in a PDCD10-dependent and Rho-independent manner. Interacts (via N-terminus) with 14-3-3 proteins; these interactions occur in a Rho-dependent manner.

The protein resides in the cytoplasm. Its subcellular location is the golgi apparatus. Downstream effector protein for Rho-type small GTPases that plays a role in cell polarity and directional migration. Acts as an adapter protein, linking active Rho proteins to STK24 and STK26 kinases, and hence positively regulates Golgi reorientation in polarized cell migration upon Rho activation. Involved in the subcellular relocation of STK26 from the Golgi to cytoplasm punctae in a Rho- and PDCD10-dependent manner upon serum stimulation. The protein is Rho family-interacting cell polarization regulator 1 (RIPOR1) of Homo sapiens (Human).